We begin with the raw amino-acid sequence, 844 residues long: DNA mismatch repair protein MutS (844 aa).

Residue 610–617 (GPNMGGKS) participates in ATP binding.

Belongs to the DNA mismatch repair MutS family.

Its function is as follows. This protein is involved in the repair of mismatches in DNA. It is possible that it carries out the mismatch recognition step. This protein has a weak ATPase activity. This chain is DNA mismatch repair protein MutS, found in Francisella tularensis subsp. novicida (strain U112).